The chain runs to 427 residues: uncharacterized protein (427 aa).

A coiled-coil region spans residues 135–168 (PILKQKLVSLESKVKKIDKEMEKHNDLLKEIQEN).

This is an uncharacterized protein from Arabidopsis thaliana (Mouse-ear cress).